Consider the following 196-residue polypeptide: dITP/XTP pyrophosphatase (196 aa).

10–15 (SGNKGK) serves as a coordination point for substrate. Glu40 and Asp69 together coordinate Mg(2+). Asp69 serves as the catalytic Proton acceptor. Substrate contacts are provided by residues Ser70, 147–150 (FGYD), Lys170, and 175–176 (HR).

This sequence belongs to the HAM1 NTPase family. Homodimer. Requires Mg(2+) as cofactor.

The enzyme catalyses XTP + H2O = XMP + diphosphate + H(+). It catalyses the reaction dITP + H2O = dIMP + diphosphate + H(+). It carries out the reaction ITP + H2O = IMP + diphosphate + H(+). In terms of biological role, pyrophosphatase that catalyzes the hydrolysis of nucleoside triphosphates to their monophosphate derivatives, with a high preference for the non-canonical purine nucleotides XTP (xanthosine triphosphate), dITP (deoxyinosine triphosphate) and ITP. Seems to function as a house-cleaning enzyme that removes non-canonical purine nucleotides from the nucleotide pool, thus preventing their incorporation into DNA/RNA and avoiding chromosomal lesions. The protein is dITP/XTP pyrophosphatase of Prochlorococcus marinus (strain NATL1A).